Here is a 439-residue protein sequence, read N- to C-terminus: Ribosomal protein uS12 methylthiotransferase RimO (439 aa).

The MTTase N-terminal domain maps to 5-115; the sequence is PRISFTSLGC…VLDAVHRALP (111 aa). The [4Fe-4S] cluster site is built by C14, C50, C79, C146, C150, and C153. In terms of domain architecture, Radical SAM core spans 132–369; that stretch reads LTPRHYAYLK…MARQQKISAR (238 aa). A TRAM domain is found at 372-438; the sequence is KRKVGTRQQI…QYDLHGSVAG (67 aa).

The protein belongs to the methylthiotransferase family. RimO subfamily. [4Fe-4S] cluster serves as cofactor.

The protein localises to the cytoplasm. It carries out the reaction L-aspartate(89)-[ribosomal protein uS12]-hydrogen + (sulfur carrier)-SH + AH2 + 2 S-adenosyl-L-methionine = 3-methylsulfanyl-L-aspartate(89)-[ribosomal protein uS12]-hydrogen + (sulfur carrier)-H + 5'-deoxyadenosine + L-methionine + A + S-adenosyl-L-homocysteine + 2 H(+). Catalyzes the methylthiolation of an aspartic acid residue of ribosomal protein uS12. This chain is Ribosomal protein uS12 methylthiotransferase RimO, found in Bradyrhizobium diazoefficiens (strain JCM 10833 / BCRC 13528 / IAM 13628 / NBRC 14792 / USDA 110).